A 599-amino-acid polypeptide reads, in one-letter code: Laccase-2 (599 aa).

The first 19 residues, M1–A19, serve as a signal peptide directing secretion. Plastocyanin-like domains are found at residues V21 to Y145 and V157 to E307. Positions 82, 84, 127, and 129 each coordinate Cu cation. Cysteines 103 and 588 form a disulfide. Residues N207, N208, N231, N397, and N443 are each glycosylated (N-linked (GlcNAc...) asparagine). The 118-residue stretch at D450–A567 folds into the Plastocyanin-like 3 domain. Cu cation-binding residues include H497, H500, H502, H549, C550, H551, and H555.

It belongs to the multicopper oxidase family. As to quaternary structure, homodimer. It depends on Cu cation as a cofactor. In mycelia, at a lower level than LCC4.

It localises to the secreted. The catalysed reaction is 4 hydroquinone + O2 = 4 benzosemiquinone + 2 H2O. In terms of biological role, lignin degradation and detoxification of lignin-derived products. This Thanatephorus cucumeris (Black scurf of potato) protein is Laccase-2 (LCC2).